A 242-amino-acid chain; its full sequence is DNA repair protein RecO (242 aa).

Belongs to the RecO family.

In terms of biological role, involved in DNA repair and RecF pathway recombination. The chain is DNA repair protein RecO from Vibrio atlanticus (strain LGP32) (Vibrio splendidus (strain Mel32)).